The chain runs to 403 residues: Poly(rC)-binding protein 4 (403 aa).

KH domains lie at 17–67 (TLTL…TITG), 101–154 (PVTL…TVSG), and 241–293 (TSSQ…TITG).

It localises to the cytoplasm. Its function is as follows. Single-stranded nucleic acid binding protein that binds preferentially to oligo dC. This is Poly(rC)-binding protein 4 (PCBP4) from Homo sapiens (Human).